The sequence spans 199 residues: Transcription factor 15 (199 aa).

The tract at residues 25-67 is disordered; the sequence is EENRSESDASDQSFGCCEGPEAARRGPGPGGGRRAGGGGGAGP. A compositionally biased stretch (gly residues) spans 51 to 66; sequence PGPGGGRRAGGGGGAG. The bHLH domain maps to 72–124; that stretch reads RQRQAANARERDRTQSVNTAFTALRTLIPTEPVDRKLSKIETVRLASSYIAHL.

In terms of assembly, heterodimer; efficient DNA binding requires dimerization with another bHLH protein, such as TCF3/E12. Interacts with MEOX2.

The protein resides in the nucleus. Functionally, early transcription factor that plays a key role in somitogenesis, paraxial mesoderm development and regulation of stem cell pluripotency. Essential for the mesenchymal to epithelial transition associated with somite formation. Required for somite morphogenesis, thereby regulating patterning of the axial skeleton and skeletal muscles. Required for proper localization of somite epithelium markers during the mesenchymal to epithelial transition. Also plays a key role in regulation of stem cell pluripotency. Promotes pluripotency exit of embryonic stem cells (ESCs) by priming ESCs for differentiation. Acts as a key regulator of self-renewal of hematopoietic stem cells (HSCs) by mediating HSCs quiescence and long-term self-renewal. Together with MEOX2, regulates transcription in heart endothelial cells to regulate fatty acid transport across heart endothelial cells. Acts by forming a heterodimer with another helix-loop-helix (bHLH) protein, such as TCF3/E12, that binds DNA on E-box motifs (5'-CANNTG-3') and activates transcription of target genes. In Homo sapiens (Human), this protein is Transcription factor 15.